Here is a 151-residue protein sequence, read N- to C-terminus: MIKDLAKNKKALHDFSILETFEAGIVLKGSEVKALRAGRANLKDSFVRVIKGELFLLNAHISYLETTHSAFRPNERAARKLLMHRKQIDKIFGQVSQDGLALVVLALYLSDKNIVKARLALAKGKNLHDKRETLKRREADKEARAAIKRYV.

This sequence belongs to the SmpB family.

Its subcellular location is the cytoplasm. Its function is as follows. Required for rescue of stalled ribosomes mediated by trans-translation. Binds to transfer-messenger RNA (tmRNA), required for stable association of tmRNA with ribosomes. tmRNA and SmpB together mimic tRNA shape, replacing the anticodon stem-loop with SmpB. tmRNA is encoded by the ssrA gene; the 2 termini fold to resemble tRNA(Ala) and it encodes a 'tag peptide', a short internal open reading frame. During trans-translation Ala-aminoacylated tmRNA acts like a tRNA, entering the A-site of stalled ribosomes, displacing the stalled mRNA. The ribosome then switches to translate the ORF on the tmRNA; the nascent peptide is terminated with the 'tag peptide' encoded by the tmRNA and targeted for degradation. The ribosome is freed to recommence translation, which seems to be the essential function of trans-translation. The chain is SsrA-binding protein from Campylobacter concisus (strain 13826).